The chain runs to 181 residues: Deoxyuridine 5'-triphosphate nucleotidohydrolase (181 aa).

Substrate is bound by residues 96-98 (RSG), N109, 113-115 (TVD), and K123.

Belongs to the dUTPase family. Mg(2+) serves as cofactor.

It catalyses the reaction dUTP + H2O = dUMP + diphosphate + H(+). It participates in pyrimidine metabolism; dUMP biosynthesis; dUMP from dCTP (dUTP route): step 2/2. In terms of biological role, this enzyme is involved in nucleotide metabolism: it produces dUMP, the immediate precursor of thymidine nucleotides and it decreases the intracellular concentration of dUTP so that uracil cannot be incorporated into DNA. In Corynebacterium efficiens (strain DSM 44549 / YS-314 / AJ 12310 / JCM 11189 / NBRC 100395), this protein is Deoxyuridine 5'-triphosphate nucleotidohydrolase.